Here is a 1075-residue protein sequence, read N- to C-terminus: Protein nervous wreck (1075 aa).

One can recognise an F-BAR domain in the interval 11 to 289 (VKFLKNLHTE…QAQQLTREYN (279 aa)). Disordered stretches follow at residues 361–381 (LRDSGQRTDPNDPNGPDLDTK) and 431–536 (SASS…DEPI). Over residues 431-453 (SASSISMRTDASGQGENPSSDSF) the composition is skewed to polar residues. Positions 469 to 482 (PKQEQQLSRDRTFS) are enriched in basic and acidic residues. Positions 493–512 (SAAAASSAAAASSSMMASSA) are enriched in low complexity. 2 SH3 domains span residues 542–603 (EAIF…IDQE) and 658–721 (SDVE…ECDE). 3 disordered regions span residues 722–747 (MGEPLSEGGDESPPPTAAPTFALPPA), 769–837 (SQDT…EKGA), and 864–917 (GADK…EGNA). 2 stretches are compositionally biased toward pro residues: residues 733–747 (SPPPTAAPTFALPPA) and 809–818 (QPPPSLPPPQ). A compositionally biased stretch (low complexity) spans 819–837 (LAKAGGSAPGSGSKVEKGA). The segment covering 883 to 897 (VSKEQPAEVAKKPDI) has biased composition (basic and acidic residues).

As to quaternary structure, homodimer. Interacts (via SH3 domain 1) with WASp. Interacts (via SH3 domain 1) with shi/dynamin. Interacts (via SH3 domain 2) with Dap160. Interacts (via F-BAR domain) with SH3PX1. Interacts (via SH3 domain 2) with Snx16. Identified in a complex with Syn and Syt1. Detected in larval body wall muscle. Detected at the neuromuscular junction, on motoneuron axons and axon terminals, at synaptic boutons in the periactive zone surrounding the synapse (at protein level). Detected on motoneuron axons and axon terminals, at synaptic boutons in the periactive zone surrounding the synapse.

The protein resides in the endomembrane system. Its subcellular location is the synapse. It localises to the cell projection. The protein localises to the axon. It is found in the presynaptic cell membrane. The protein resides in the cytoplasmic vesicle. Its subcellular location is the secretory vesicle. It localises to the synaptic vesicle. The protein localises to the recycling endosome. In terms of biological role, adapter protein that provides a link between vesicular membrane traffic and the actin assembly machinery. Acts together with Cdc42 to stimulate actin nucleation mediated by WASp and the ARP2/3 complex. Binds to membranes enriched in phosphatidylinositol 4,5-bisphosphate and causes local membrane deformation. Required for normal structure and function of synapses at the neuromuscular junction. Plays a role in synaptic vesicle trafficking. Required for the release of a normal number of synaptic vesicles per action potential. The sequence is that of Protein nervous wreck from Drosophila melanogaster (Fruit fly).